The following is a 205-amino-acid chain: Homeobox protein goosecoid-2 (205 aa).

Disordered stretches follow at residues 33–58 (SLPA…EPGA) and 185–205 (KRAS…KGSC). Positions 126 to 185 (TRRHRTIFSEEQLQALEALFVQNQYPDVSTRERLAGRIRLREERVEVWFKNRRAKWRHQK) form a DNA-binding region, homeobox.

The protein belongs to the paired homeobox family. Bicoid subfamily. As to expression, detected in adult testis and pituitary, and in 9-10 week fetal tissue (thorax). Probably expressed in other tissues at low levels.

It is found in the nucleus. In terms of biological role, may have a role in development. May regulate its own transcription. May bind the bicoid consensus sequence TAATCC. This is Homeobox protein goosecoid-2 (GSC2) from Homo sapiens (Human).